Here is a 532-residue protein sequence, read N- to C-terminus: Nucleobase-ascorbate transporter 6 (532 aa).

Positions 1-24 (MAGGGAPAPKADEPQPHPPKDQLP) are disordered. The segment covering 10 to 20 (KADEPQPHPPK) has biased composition (basic and acidic residues). Helical transmembrane passes span 39-59 (AILL…LIPT), 75-95 (VIQT…LFGT), 97-117 (LPAV…IILS), 137-157 (TQGA…SGLW), 163-185 (FLSP…EFGF), 192-212 (IEIG…LPHV), 223-243 (FAVI…TVGG), 289-309 (FAMM…FVAV), 361-381 (VGSR…SILG), 392-414 (APII…LSFL), 426-446 (FILG…NEYT), and 463-483 (DMVN…AFFL).

The protein belongs to the nucleobase:cation symporter-2 (NCS2) (TC 2.A.40) family. Expressed in the apical region of cotyledons 4 days after imbibition (DAI). Expressed in the whole vasculature at 12 DAI. Expressed in the root central cylinder and lateral root primordia. Expressed in the vasculature of sepals, filaments, carpels and developing siliques.

It is found in the membrane. The chain is Nucleobase-ascorbate transporter 6 (NAT6) from Arabidopsis thaliana (Mouse-ear cress).